Reading from the N-terminus, the 376-residue chain is Alcohol dehydrogenase class-3 (376 aa).

Alanine 1 bears the N-acetylalanine mark. Cysteine 47, histidine 69, cysteine 99, cysteine 102, cysteine 105, cysteine 113, and cysteine 176 together coordinate Zn(2+).

It belongs to the zinc-containing alcohol dehydrogenase family. Class-III subfamily. In terms of assembly, homodimer. Zn(2+) is required as a cofactor.

The protein localises to the cytoplasm. It carries out the reaction a primary alcohol + NAD(+) = an aldehyde + NADH + H(+). The enzyme catalyses a secondary alcohol + NAD(+) = a ketone + NADH + H(+). It catalyses the reaction S-(hydroxymethyl)glutathione + NADP(+) = S-formylglutathione + NADPH + H(+). The catalysed reaction is S-(hydroxymethyl)glutathione + NAD(+) = S-formylglutathione + NADH + H(+). It carries out the reaction S-nitrosoglutathione + NADH + H(+) = S-(hydroxysulfenamide)glutathione + NAD(+). Functionally, class-III ADH is remarkably ineffective in oxidizing ethanol, but it readily catalyzes the oxidation of long-chain primary alcohols and the oxidation of S-(hydroxymethyl) glutathione. Also acts as a S-nitroso-glutathione reductase by catalyzing the NADH-dependent reduction of S-nitrosoglutathione, thereby regulating protein S-nitrosylation. The sequence is that of Alcohol dehydrogenase class-3 from Scyliorhinus canicula (Small-spotted catshark).